The following is a 160-amino-acid chain: E3 ubiquitin ligase complex SCF subunit sconC (160 aa).

The interval 101–160 is interaction with the F-box domain of F-box proteins; that stretch reads ILAANYLDIKALLDVGCKTVANMIKGKSPEEIRKTFNIQNDFTPEEEDQIRRENEWAEDR.

Belongs to the SKP1 family. Component of the SCF (SKP1-CUL1-F-box protein) E3 ubiquitin ligase complexes.

It functions in the pathway protein modification; protein ubiquitination. Functionally, essential component of the SCF (SKP1-CUL1-F-box protein) E3 ubiquitin ligase complexes, which mediate the ubiquitination and subsequent proteasomal degradation of target proteins. Controls sulfur metabolite repression, probably by mediating the inactivation or degradation of the metR transcription factor. The polypeptide is E3 ubiquitin ligase complex SCF subunit sconC (sconC) (Talaromyces marneffei (strain ATCC 18224 / CBS 334.59 / QM 7333) (Penicillium marneffei)).